Here is a 177-residue protein sequence, read N- to C-terminus: Probable DNA-directed RNA polymerase subunit delta (177 aa).

Residues 14-83 (LSMIEVARAI…GENKWGLRSW (70 aa)) form the HTH HARE-type domain. Acidic residues-rich tracts occupy residues 117–134 (GDDDAIDYGHDDPEDEDN) and 142–157 (EYDDENPDDEKDEVES). The tract at residues 117–164 (GDDDAIDYGHDDPEDEDNYPGSVSSEYDDENPDDEKDEVESYDQKSTK) is disordered.

The protein belongs to the RpoE family. RNAP is composed of a core of 2 alpha, a beta and a beta' subunits. The core is associated with a delta subunit and one of several sigma factors.

In terms of biological role, participates in both the initiation and recycling phases of transcription. In the presence of the delta subunit, RNAP displays an increased specificity of transcription, a decreased affinity for nucleic acids, and an increased efficiency of RNA synthesis because of enhanced recycling. The sequence is that of Probable DNA-directed RNA polymerase subunit delta from Streptococcus suis (strain 98HAH33).